Reading from the N-terminus, the 579-residue chain is Pentatricopeptide repeat-containing protein At2g15690, mitochondrial (579 aa).

The N-terminal 49 residues, 1 to 49, are a transit peptide targeting the mitochondrion; it reads MSSLMAIRCARTQNIVTIGSLLQLRSSFPRLSSQFHFSGTLNSIPIKHL. 2 stretches are compositionally biased toward polar residues: residues 56-71 and 78-103; these read NDYH…SQHQ and SFDS…TQHG. The interval 56-208 is disordered; sequence NDYHQNPQSG…QMNEVAPPPS (153 aa). Low complexity-rich tracts occupy residues 117 to 136 and 148 to 199; these read GGQR…QMSQ and RPQY…SPNQ. 5 PPR repeats span residues 235-269, 270-300, 301-335, 336-371, and 372-402; these read DREC…KFRG, DPKL…MVDK, DMDS…GLKP, NEET…GISP, and KTEH…LPFE. Positions 485–579 are type DYW motif; the sequence is GVVYVPDTRF…DGKCSCGDYW (95 aa).

This sequence belongs to the PPR family. PCMP-H subfamily.

The protein resides in the mitochondrion. This Arabidopsis thaliana (Mouse-ear cress) protein is Pentatricopeptide repeat-containing protein At2g15690, mitochondrial (PCMP-H66).